The sequence spans 269 residues: Putative pyruvate, phosphate dikinase regulatory protein (269 aa).

151–158 (GVSRSSKT) serves as a coordination point for ADP.

The protein belongs to the pyruvate, phosphate/water dikinase regulatory protein family. PDRP subfamily.

It catalyses the reaction N(tele)-phospho-L-histidyl/L-threonyl-[pyruvate, phosphate dikinase] + ADP = N(tele)-phospho-L-histidyl/O-phospho-L-threonyl-[pyruvate, phosphate dikinase] + AMP + H(+). The enzyme catalyses N(tele)-phospho-L-histidyl/O-phospho-L-threonyl-[pyruvate, phosphate dikinase] + phosphate + H(+) = N(tele)-phospho-L-histidyl/L-threonyl-[pyruvate, phosphate dikinase] + diphosphate. Its function is as follows. Bifunctional serine/threonine kinase and phosphorylase involved in the regulation of the pyruvate, phosphate dikinase (PPDK) by catalyzing its phosphorylation/dephosphorylation. The polypeptide is Putative pyruvate, phosphate dikinase regulatory protein (Geobacter sulfurreducens (strain ATCC 51573 / DSM 12127 / PCA)).